Consider the following 549-residue polypeptide: MEADFVIIGSGSAGSAMAYRLSENGRYSVIVIEYGVPDVGPLIQMPAALSFPMNMETYDWGFSSEPEPHIGGRSLVTPRGKVLGGSSSINGMVYVRGHACDFDHWSQSGARGWAYADVLPYFKRMENSQGGQEGWRGTNGPLYVQRGKRDNPLFHAFVEAGHQAGFEVTDDYNGEKQEGFGPMEQTIHNGRRWSAANAYLKPALKRPNVKLVKGFARKIVLEGKRAVGVEIEAGRTFSTIRARREVIIAASSINSPKLLMLSGIGPAAHLKEHGIDLVADRPGVGQNLQDHLEVYIQQECTQPITLYSELNLFSKARIGVEWLLFKTGDGATNHFESAAFVRSKAGVEYPDIQYHFLPVAIRYDGKAAAQSHGFQAHVGPMRSKSRGSVTLRSANPREKPVIKFNYMSHEDDWADFRHCVRLTREIFGQAAFDPYRGAEIQPGAHVQTDDEIDNFIREHVESAFHPCGTCKMGAVDDPMAVVDPECRVIGVEGLRVADSSIFPRITNGNLNGPSIMVGEKASDHILGRTPLARSNQEPWINPRWQVSDR.

4–33 serves as a coordination point for FAD; the sequence is DFVIIGSGSAGSAMAYRLSENGRYSVIVIE. The active-site Proton acceptor is the H465.

It belongs to the GMC oxidoreductase family. FAD serves as cofactor.

It carries out the reaction choline + A = betaine aldehyde + AH2. It catalyses the reaction betaine aldehyde + NAD(+) + H2O = glycine betaine + NADH + 2 H(+). It functions in the pathway amine and polyamine biosynthesis; betaine biosynthesis via choline pathway; betaine aldehyde from choline (cytochrome c reductase route): step 1/1. In terms of biological role, involved in the biosynthesis of the osmoprotectant glycine betaine. Catalyzes the oxidation of choline to betaine aldehyde and betaine aldehyde to glycine betaine at the same rate. This chain is Oxygen-dependent choline dehydrogenase, found in Brucella suis biovar 1 (strain 1330).